The chain runs to 273 residues: Large ribosomal subunit protein uL2 (273 aa).

The segment at 228–273 is disordered; that stretch reads VDHPHGGGEGKTSGGRHPVTPWGFSTKGKKTRKNKRTSKFIVKKRK. Residues 254–273 are compositionally biased toward basic residues; sequence KGKKTRKNKRTSKFIVKKRK.

Belongs to the universal ribosomal protein uL2 family. In terms of assembly, part of the 50S ribosomal subunit. Forms a bridge to the 30S subunit in the 70S ribosome.

Functionally, one of the primary rRNA binding proteins. Required for association of the 30S and 50S subunits to form the 70S ribosome, for tRNA binding and peptide bond formation. It has been suggested to have peptidyltransferase activity; this is somewhat controversial. Makes several contacts with the 16S rRNA in the 70S ribosome. The polypeptide is Large ribosomal subunit protein uL2 (Rickettsia prowazekii (strain Madrid E)).